A 485-amino-acid polypeptide reads, in one-letter code: MTHWIAGDWVLGEGETIQSLSPYNSEVVWKGESATEAQVESAVNAARNAFIEWKKLPFENRQAIVERFAELVKENADSIAEVIAKETGKPFWETKTEAGAMVGKIAISIRAYHERTPYKEREAAGNKIVLRHRPLGVMAVFGPYNFPGHLPNGHIVPALLAGNTVVLKPSEQTPWTSEVIMKLWQKSGLPKGVINLVQGARATGEALANTKGIDGLLFTGSANTGHILHRQFAGDTGKMLALEMGGNNPMVISKAFGDLDATVYTIVQSAFISAGQRCTCARRLYVPEGKQGDALLARLVDVTKNIHVDQPFSETTPFMGPQISIAAAEFILNAQKKLQALGGESLLEARSLGHAFVSPGIIDATNVAELPDEEYFGPLLQVIRYTTLAQAVELANDTRYGLSAGLVSTDDSEWDYFVEHIRSGIVNRNRQLTGASGDAPFGGPGASGNLKPSAYYAADYCAYPMASMEGDACEIPEQLSPGLTL.

220–225 provides a ligand contact to NAD(+); that stretch reads GSANTG. Residues glutamate 243 and cysteine 278 contribute to the active site.

The protein belongs to the aldehyde dehydrogenase family. AstD subfamily.

The catalysed reaction is N-succinyl-L-glutamate 5-semialdehyde + NAD(+) + H2O = N-succinyl-L-glutamate + NADH + 2 H(+). It functions in the pathway amino-acid degradation; L-arginine degradation via AST pathway; L-glutamate and succinate from L-arginine: step 4/5. Its function is as follows. Catalyzes the NAD-dependent reduction of succinylglutamate semialdehyde into succinylglutamate. The protein is N-succinylglutamate 5-semialdehyde dehydrogenase of Aliivibrio fischeri (strain ATCC 700601 / ES114) (Vibrio fischeri).